A 498-amino-acid chain; its full sequence is Transcription factor bHLH78 (498 aa).

Disordered regions lie at residues 1-24 (MDNELFMNTEFPPPPEMATHFEHQ) and 207-297 (LVSP…PPKD). Over residues 233 to 246 (NPISTASPSPSFSK) the composition is skewed to polar residues. Residues 259–270 (SSEEKGGKRRRE) show a composition bias toward basic and acidic residues. A compositionally biased stretch (acidic residues) spans 271 to 281 (EEDDEEEEGEG). The bHLH domain maps to 307-357 (QATDSHSLAERVRREKIGERMKLLQDLVPGCNKVTGKALMLDEIINYVQSL).

As to quaternary structure, homodimer. Binds reversibly to CRY2 after blue light illumination. In terms of tissue distribution, expressed constitutively in roots, leaves, stems, and flowers.

Its subcellular location is the nucleus. Transcription factor that binds DNA to G box 5'-CACGTG-3' and to E-box 5'-CANNTG-3'. Binds to chromatin DNA of the FT gene and promotes its expression, and thus triggers flowering in response to blue light. This Arabidopsis thaliana (Mouse-ear cress) protein is Transcription factor bHLH78 (BHLH78).